A 271-amino-acid polypeptide reads, in one-letter code: Diaminopimelate epimerase (271 aa).

Residues asparagine 13, glutamine 46, and asparagine 66 each contribute to the substrate site. Cysteine 75 (proton donor) is an active-site residue. Substrate-binding positions include 76 to 77, asparagine 155, asparagine 188, and 206 to 207; these read GN and ER. Cysteine 215 serves as the catalytic Proton acceptor. A substrate-binding site is contributed by 216 to 217; that stretch reads GS.

The protein belongs to the diaminopimelate epimerase family. In terms of assembly, homodimer.

It is found in the cytoplasm. The enzyme catalyses (2S,6S)-2,6-diaminopimelate = meso-2,6-diaminopimelate. Its pathway is amino-acid biosynthesis; L-lysine biosynthesis via DAP pathway; DL-2,6-diaminopimelate from LL-2,6-diaminopimelate: step 1/1. Its function is as follows. Catalyzes the stereoinversion of LL-2,6-diaminopimelate (L,L-DAP) to meso-diaminopimelate (meso-DAP), a precursor of L-lysine and an essential component of the bacterial peptidoglycan. The protein is Diaminopimelate epimerase of Vesicomyosocius okutanii subsp. Calyptogena okutanii (strain HA).